The chain runs to 182 residues: Ribosome-recycling factor (182 aa).

It belongs to the RRF family.

The protein resides in the cytoplasm. Its function is as follows. Responsible for the release of ribosomes from messenger RNA at the termination of protein biosynthesis. May increase the efficiency of translation by recycling ribosomes from one round of translation to another. The sequence is that of Ribosome-recycling factor from Prochlorococcus marinus (strain MIT 9313).